A 599-amino-acid chain; its full sequence is Elongation factor 4 (599 aa).

Positions Lys2–Gln184 constitute a tr-type G domain. Residues Asp14–Thr19 and Asn131–Asp134 each bind GTP.

This sequence belongs to the TRAFAC class translation factor GTPase superfamily. Classic translation factor GTPase family. LepA subfamily.

It is found in the cell inner membrane. The catalysed reaction is GTP + H2O = GDP + phosphate + H(+). In terms of biological role, required for accurate and efficient protein synthesis under certain stress conditions. May act as a fidelity factor of the translation reaction, by catalyzing a one-codon backward translocation of tRNAs on improperly translocated ribosomes. Back-translocation proceeds from a post-translocation (POST) complex to a pre-translocation (PRE) complex, thus giving elongation factor G a second chance to translocate the tRNAs correctly. Binds to ribosomes in a GTP-dependent manner. This is Elongation factor 4 from Salmonella gallinarum (strain 287/91 / NCTC 13346).